Here is a 143-residue protein sequence, read N- to C-terminus: Large ribosomal subunit protein uL16 (143 aa).

It belongs to the universal ribosomal protein uL16 family. Part of the 50S ribosomal subunit.

Its function is as follows. Binds 23S rRNA and is also seen to make contacts with the A and possibly P site tRNAs. The protein is Large ribosomal subunit protein uL16 of Caulobacter vibrioides (strain ATCC 19089 / CIP 103742 / CB 15) (Caulobacter crescentus).